A 692-amino-acid polypeptide reads, in one-letter code: Elongation factor G (692 aa).

One can recognise a tr-type G domain in the interval 8 to 282; sequence EKVRNIGIAA…AVVDYLPAPS (275 aa). Residues 17–24, 81–85, and 135–138 each bind GTP; these read AHIDAGKT, DTPGH, and NKMD.

The protein belongs to the TRAFAC class translation factor GTPase superfamily. Classic translation factor GTPase family. EF-G/EF-2 subfamily.

The protein resides in the cytoplasm. Its function is as follows. Catalyzes the GTP-dependent ribosomal translocation step during translation elongation. During this step, the ribosome changes from the pre-translocational (PRE) to the post-translocational (POST) state as the newly formed A-site-bound peptidyl-tRNA and P-site-bound deacylated tRNA move to the P and E sites, respectively. Catalyzes the coordinated movement of the two tRNA molecules, the mRNA and conformational changes in the ribosome. The protein is Elongation factor G of Nostoc punctiforme (strain ATCC 29133 / PCC 73102).